The chain runs to 102 residues: NADH-quinone oxidoreductase subunit K (102 aa).

3 helical membrane passes run Ile5 to Leu25, Ile31 to Phe51, and Phe66 to Phe86.

It belongs to the complex I subunit 4L family. In terms of assembly, NDH-1 is composed of 14 different subunits. Subunits NuoA, H, J, K, L, M, N constitute the membrane sector of the complex.

It is found in the cell inner membrane. The enzyme catalyses a quinone + NADH + 5 H(+)(in) = a quinol + NAD(+) + 4 H(+)(out). NDH-1 shuttles electrons from NADH, via FMN and iron-sulfur (Fe-S) centers, to quinones in the respiratory chain. The immediate electron acceptor for the enzyme in this species is believed to be ubiquinone. Couples the redox reaction to proton translocation (for every two electrons transferred, four hydrogen ions are translocated across the cytoplasmic membrane), and thus conserves the redox energy in a proton gradient. This chain is NADH-quinone oxidoreductase subunit K, found in Bartonella henselae (strain ATCC 49882 / DSM 28221 / CCUG 30454 / Houston 1) (Rochalimaea henselae).